The primary structure comprises 250 residues: Type-1Ab cytolytic delta-endotoxin (250 aa).

The protein belongs to the cyt1/cyt2 endotoxin family. In terms of processing, active after proteolytic processing.

Its function is as follows. Kills the larvae of dipteran insects by making pores in the epithelial cell membrane of the insect midgut. In Bacillus thuringiensis subsp. medellin, this protein is Type-1Ab cytolytic delta-endotoxin (cyt1Ab1).